The sequence spans 79 residues: Small ribosomal subunit protein uS17 (79 aa).

Belongs to the universal ribosomal protein uS17 family. As to quaternary structure, part of the 30S ribosomal subunit.

In terms of biological role, one of the primary rRNA binding proteins, it binds specifically to the 5'-end of 16S ribosomal RNA. In Rhizobium etli (strain ATCC 51251 / DSM 11541 / JCM 21823 / NBRC 15573 / CFN 42), this protein is Small ribosomal subunit protein uS17.